A 304-amino-acid polypeptide reads, in one-letter code: Gamma-gliadin B-I (304 aa).

A signal peptide spans 1–23 (MKTFLVFALIAVVATSAIAQMET). Positions 32–92 (PWQQQPLPPQ…PFSQQQQPVL (61 aa)) are disordered. The span at 41–92 (QQSFSQQPPFSQQQQQPLPQQPSFSQQQPPFSQQQPILSQQPPFSQQQQPVL) shows a compositional bias: low complexity.

Belongs to the gliadin/glutenin family.

Its function is as follows. Gliadin is the major seed storage protein in wheat. The chain is Gamma-gliadin B-I from Triticum aestivum (Wheat).